A 226-amino-acid polypeptide reads, in one-letter code: Choline transport system permease protein OpuBD (226 aa).

The region spanning 22–202 is the ABC transmembrane type-1 domain; the sequence is FGRHFLMSAY…VMAVGADLLM (181 aa). The next 5 helical transmembrane spans lie at 27–47, 52–72, 73–93, 148–168, and 182–202; these read LMSA…GILI, RLSA…ALAM, LAVL…SLFL, ALVI…GGLG, and AIIL…DLLM.

It belongs to the binding-protein-dependent transport system permease family. CysTW subfamily.

It localises to the cell membrane. Functionally, involved in a high affinity multicomponent binding-protein-dependent transport system for choline; probably responsible for the translocation of the substrate across the membrane. This Bacillus subtilis (strain 168) protein is Choline transport system permease protein OpuBD (opuBD).